Here is a 526-residue protein sequence, read N- to C-terminus: Peptide chain release factor 3 (526 aa).

Positions 8 to 277 constitute a tr-type G domain; it reads GKRRTFAIIS…GLTEWAPAPQ (270 aa). Residues 17 to 24, 85 to 89, and 139 to 142 each bind GTP; these read SHPDAGKT, DTPGH, and NKMD.

It belongs to the TRAFAC class translation factor GTPase superfamily. Classic translation factor GTPase family. PrfC subfamily.

Its subcellular location is the cytoplasm. Increases the formation of ribosomal termination complexes and stimulates activities of RF-1 and RF-2. It binds guanine nucleotides and has strong preference for UGA stop codons. It may interact directly with the ribosome. The stimulation of RF-1 and RF-2 is significantly reduced by GTP and GDP, but not by GMP. The sequence is that of Peptide chain release factor 3 from Aliivibrio salmonicida (strain LFI1238) (Vibrio salmonicida (strain LFI1238)).